Reading from the N-terminus, the 306-residue chain is Agmatinase (306 aa).

Mn(2+) contacts are provided by histidine 126, aspartate 149, histidine 151, aspartate 153, aspartate 230, and aspartate 232.

This sequence belongs to the arginase family. Agmatinase subfamily. Mn(2+) is required as a cofactor.

It catalyses the reaction agmatine + H2O = urea + putrescine. It participates in amine and polyamine biosynthesis; putrescine biosynthesis via agmatine pathway; putrescine from agmatine: step 1/1. Its function is as follows. Catalyzes the formation of putrescine from agmatine. The sequence is that of Agmatinase from Escherichia coli O1:K1 / APEC.